The chain runs to 268 residues: Small ribosomal subunit protein uS2 (268 aa).

A laminin-binding region spans residues 161 to 179 (IPCNNDKYSIALMLWMLAR).

This sequence belongs to the universal ribosomal protein uS2 family. Component of the small ribosomal subunit. Mature ribosomes consist of a small (40S) and a large (60S) subunit. The 40S subunit contains about 33 different proteins and 1 molecule of RNA (18S). The 60S subunit contains about 49 different proteins and 3 molecules of RNA (28S, 5.8S and 5S). Interacts with ribosomal protein S21.

It localises to the cytoplasm. Functionally, required for the assembly and/or stability of the 40S ribosomal subunit. Required for the processing of the 20S rRNA-precursor to mature 18S rRNA in a late step of the maturation of 40S ribosomal subunits. Binds laminin. In Echinococcus granulosus (Hydatid tapeworm), this protein is Small ribosomal subunit protein uS2 (egmo3).